The chain runs to 564 residues: Phenylalanine--tRNA ligase beta subunit (564 aa).

Residues 286-362 (YFQNSLKINV…IGKGLDNFKS (77 aa)) enclose the B5 domain. Aspartate 340, aspartate 346, glutamate 349, and glutamate 350 together coordinate Mg(2+).

It belongs to the phenylalanyl-tRNA synthetase beta subunit family. Type 2 subfamily. In terms of assembly, tetramer of two alpha and two beta subunits. Mg(2+) is required as a cofactor.

It localises to the cytoplasm. It catalyses the reaction tRNA(Phe) + L-phenylalanine + ATP = L-phenylalanyl-tRNA(Phe) + AMP + diphosphate + H(+). This chain is Phenylalanine--tRNA ligase beta subunit, found in Borrelia duttonii (strain Ly).